Reading from the N-terminus, the 129-residue chain is Small ribosomal subunit protein uS13 (129 aa).

A compositionally biased stretch (basic residues) spans 92–114 (HKHNLPVRGQRTKTNARTRRGPR). Residues 92 to 129 (HKHNLPVRGQRTKTNARTRRGPRKTVAGRGQKRGATKK) are disordered.

Belongs to the universal ribosomal protein uS13 family. Part of the 30S ribosomal subunit. Forms a loose heterodimer with protein S19. Forms two bridges to the 50S subunit in the 70S ribosome.

Functionally, located at the top of the head of the 30S subunit, it contacts several helices of the 16S rRNA. In the 70S ribosome it contacts the 23S rRNA (bridge B1a) and protein L5 of the 50S subunit (bridge B1b), connecting the 2 subunits; these bridges are implicated in subunit movement. Contacts the tRNAs in the A and P-sites. This is Small ribosomal subunit protein uS13 from Dehalococcoides mccartyi (strain ATCC BAA-2266 / KCTC 15142 / 195) (Dehalococcoides ethenogenes (strain 195)).